The following is a 431-amino-acid chain: Ribosomal protein uS12 methylthiotransferase RimO (431 aa).

In terms of domain architecture, MTTase N-terminal spans 4 to 120; sequence HKLFLLSLGC…ILAALGAAYH (117 aa). Positions 13, 49, 83, 144, 148, and 151 each coordinate [4Fe-4S] cluster. Positions 130 to 359 constitute a Radical SAM core domain; the sequence is LTPPHYTYLK…MELQESVSQD (230 aa). The 68-residue stretch at 362–429 folds into the TRAM domain; it reads RDFEGKEITV…PFDLVGEVIG (68 aa).

The protein belongs to the methylthiotransferase family. RimO subfamily. [4Fe-4S] cluster serves as cofactor.

The protein localises to the cytoplasm. It catalyses the reaction L-aspartate(89)-[ribosomal protein uS12]-hydrogen + (sulfur carrier)-SH + AH2 + 2 S-adenosyl-L-methionine = 3-methylsulfanyl-L-aspartate(89)-[ribosomal protein uS12]-hydrogen + (sulfur carrier)-H + 5'-deoxyadenosine + L-methionine + A + S-adenosyl-L-homocysteine + 2 H(+). Catalyzes the methylthiolation of an aspartic acid residue of ribosomal protein uS12. The protein is Ribosomal protein uS12 methylthiotransferase RimO of Pelodictyon phaeoclathratiforme (strain DSM 5477 / BU-1).